The following is a 198-amino-acid chain: T-cell surface glycoprotein CD3 epsilon chain (198 aa).

The signal sequence occupies residues 1–21 (MRAGTLWRVLALWLLSVAAWG). The Extracellular portion of the chain corresponds to 22 to 120 (QEDDDHADDY…EACMEVDLTT (99 aa)). One can recognise an Ig-like domain in the interval 28-106 (ADDYTQKLFT…KENEHILYLK (79 aa)). An intrachain disulfide couples Cys49 to Cys90. The helical transmembrane segment at 121 to 141 (VASIVVADVCVTLGLLLLVYY) threads the bilayer. Residues 142-198 (WSKNRKAKCKPVTRGAGAGGRPRGQNKERPPPVPNPDYEPIRKGQRDLYSGLNQRGI) are Cytoplasmic-facing. A disordered region spans residues 153 to 198 (VTRGAGAGGRPRGQNKERPPPVPNPDYEPIRKGQRDLYSGLNQRGI). The tract at residues 166–183 (QNKERPPPVPNPDYEPIR) is NUMB-binding region. The 28-residue stretch at 169 to 196 (ERPPPVPNPDYEPIRKGQRDLYSGLNQR) folds into the ITAM domain. Residues 170-177 (RPPPVPNP) form a proline-rich sequence region. A phosphotyrosine mark is found at Tyr179 and Tyr190.

As to quaternary structure, the TCR-CD3 complex is composed of a CD3D/CD3E and a CD3G/CD3E heterodimers that preferentially associate with TCRalpha and TCRbeta, respectively, to form TCRalpha/CD3E/CD3G and TCRbeta/CD3G/CD3E trimers. In turn, the hexamer interacts with CD3Z homodimer to form the TCR-CD3 complex. Alternatively, TCRalpha and TCRbeta can be replaced by TCRgamma and TCRdelta. Interacts with CD6. Interacts (via Proline-rich sequence) with NCK1; the interaction is ligand dependent but independent of tyrosine kinase activation. Post-translationally, phosphorylated on Tyr residues after T-cell receptor triggering by LCK in association with CD4/CD8.

It localises to the cell membrane. Part of the TCR-CD3 complex present on T-lymphocyte cell surface that plays an essential role in adaptive immune response. When antigen presenting cells (APCs) activate T-cell receptor (TCR), TCR-mediated signals are transmitted across the cell membrane by the CD3 chains CD3D, CD3E, CD3G and CD3Z. All CD3 chains contain immunoreceptor tyrosine-based activation motifs (ITAMs) in their cytoplasmic domain. Upon TCR engagement, these motifs become phosphorylated by Src family protein tyrosine kinases LCK and FYN, resulting in the activation of downstream signaling pathways. In addition of this role of signal transduction in T-cell activation, CD3E plays an essential role in correct T-cell development. Also participates in internalization and cell surface down-regulation of TCR-CD3 complexes via endocytosis sequences present in CD3E cytosolic region. In addition to its role as a TCR coreceptor, it serves as a receptor for ITPRIPL1. Ligand recognition inhibits T-cell activation by promoting interaction with NCK1, which prevents CD3E-ZAP70 interaction and blocks the ERK-NFkB signaling cascade and calcium influx. This Oryctolagus cuniculus (Rabbit) protein is T-cell surface glycoprotein CD3 epsilon chain (CD3E).